Reading from the N-terminus, the 340-residue chain is Protein RecA (340 aa).

An ATP-binding site is contributed by Gly-65–Thr-72.

The protein belongs to the RecA family.

Its subcellular location is the cytoplasm. Functionally, can catalyze the hydrolysis of ATP in the presence of single-stranded DNA, the ATP-dependent uptake of single-stranded DNA by duplex DNA, and the ATP-dependent hybridization of homologous single-stranded DNAs. It interacts with LexA causing its activation and leading to its autocatalytic cleavage. The polypeptide is Protein RecA (Thermus thermophilus).